The chain runs to 21 residues: Cupiennin-6a (21 aa).

The residue at position 21 (Ser21) is a Serine amide.

As to expression, expressed by the venom gland.

Its subcellular location is the secreted. The protein is Cupiennin-6a of Cupiennius salei (American wandering spider).